The chain runs to 787 residues: ER degradation-enhancing alpha-mannosidase-like protein 1 (787 aa).

Residues 1-22 (MGSLHSIFCVCLILLCIFKENS) form the signal peptide. Residues Asn479, Asn609, Asn670, Asn693, and Asn756 are each glycosylated (N-linked (GlcNAc...) asparagine).

The protein belongs to the glycosyl hydrolase 47 family.

It is found in the endoplasmic reticulum lumen. In terms of biological role, alpha-mannosidase-like protein involved in endoplasmic reticulum-associated degradation (ERAD). Delivers misfolded glycoproteins to proteasomes. It lacks mannosidase activity. This chain is ER degradation-enhancing alpha-mannosidase-like protein 1 (mnl1), found in Schizosaccharomyces pombe (strain 972 / ATCC 24843) (Fission yeast).